We begin with the raw amino-acid sequence, 162 residues long: Putative ethylene-responsive transcription factor ERF121 (162 aa).

Disordered regions lie at residues 1-21 (MDYS…PPNL), 84-103 (IKQE…KWSA), and 139-162 (KRSA…GGDD). Over residues 87 to 98 (EKKHKGVRKKPS) the composition is skewed to basic residues. The AP2/ERF DNA-binding region spans 89–146 (KHKGVRKKPSGKWSAEIWDPSTRTRRWLGTFPTAEMAADAYDEAAAALVEKRSARRGS).

The protein belongs to the AP2/ERF transcription factor family. ERF subfamily.

Its subcellular location is the nucleus. In terms of biological role, probably acts as a transcriptional activator. Binds to the GCC-box pathogenesis-related promoter element. May be involved in the regulation of gene expression by stress factors and by components of stress signal transduction pathways. This Arabidopsis thaliana (Mouse-ear cress) protein is Putative ethylene-responsive transcription factor ERF121 (ERF121).